The primary structure comprises 362 residues: Glutaminase-asparaginase (362 aa).

Residues 1–25 form the signal peptide; the sequence is MKPLLHAFAPGVMALMLLLPQAAQA. An Asparaginase/glutaminase domain is found at 35–362; it reads SNVVILATGG…KELQRIFWEY (328 aa). The Acyl-ester intermediate role is filled by Thr45. Residues Ser92 and 125 to 126 each bind substrate; that span reads TD.

The protein belongs to the asparaginase 1 family. In terms of assembly, homotetramer.

It localises to the periplasm. The catalysed reaction is L-glutamine + H2O = L-glutamate + NH4(+). The enzyme catalyses L-asparagine + H2O = L-aspartate + NH4(+). This is Glutaminase-asparaginase (ansB) from Pseudomonas aeruginosa (strain ATCC 15692 / DSM 22644 / CIP 104116 / JCM 14847 / LMG 12228 / 1C / PRS 101 / PAO1).